We begin with the raw amino-acid sequence, 49 residues long: Large ribosomal subunit protein eL40 (49 aa).

The protein belongs to the eukaryotic ribosomal protein eL40 family.

The sequence is that of Large ribosomal subunit protein eL40 from Methanosarcina acetivorans (strain ATCC 35395 / DSM 2834 / JCM 12185 / C2A).